The following is a 478-amino-acid chain: UBP1-associated protein 2A (478 aa).

The interval 1–99 (MTKKRKLEGE…NQEDDDDEPI (99 aa)) is disordered. Positions 41-75 (GDVEEVEYEEVEEEQEEEVEDDDDEDDGDENEDQT) are enriched in acidic residues. RRM domains lie at 140–217 (RKIF…LASK) and 245–328 (KKIY…KPGK). 2 disordered regions span residues 321 to 359 (IDGPKPGKQQQHHHNPHAYNNPRYQRNDNNGYGPPGGHG) and 442 to 478 (GTQPGLQGGYQTPQPGQGGTSRGQHGVGPYGTPYMGH). A compositionally biased stretch (low complexity) spans 442 to 456 (GTQPGLQGGYQTPQP). The span at 457-470 (GQGGTSRGQHGVGP) shows a compositional bias: gly residues.

In terms of assembly, interacts with UBA1A, UBA2A, UBP1A, UBP1B, UBP1C and SRK2E. Expressed in young leaves, flowers and embryos.

The protein localises to the nucleus. Its function is as follows. Heterogeneous nuclear ribonucleoprotein (hnRNP)-like protein that acts as a component of a complex regulating the turnover of mRNAs in the nucleus. Binds with high affinity to RNA molecules that contain U-rich sequences in 3'-UTRs. May function in complex with UBP1 and contribute to the stabilization of mRNAs in the nucleus. However, unlike UBP1, UBA2A does not stimulate pre-mRNA splicing. The sequence is that of UBP1-associated protein 2A (UBA2A) from Arabidopsis thaliana (Mouse-ear cress).